Here is an 88-residue protein sequence, read N- to C-terminus: Chaplin-F (88 aa).

A signal peptide spans M1–A36. Positions S47–N87 constitute a Chaplin domain. C67 and C85 are oxidised to a cystine.

Belongs to the chaplin family. Short chaplin subfamily. As to quaternary structure, homodimer; disulfide linked. About 20% of ChpF isolated from cell wall forms disulfide-bonded homodimers.

Its subcellular location is the cell surface. The protein localises to the secreted. It is found in the cell wall. It localises to the fimbrium. In terms of biological role, one of 8 partially redundant surface-active proteins required for efficient formation of aerial mycelium; the short chaplins assemble into a hydrophobic, amyloidal fibrillar surface layer that envelopes and protects aerial hyphae and spores, presumably anchored to the long chaplins. Chaplins have an overlapping function with the surface-active SapB peptide; chaplins are essential on minimal medium while on rich medium both chaplins and SapB are required for efficient aerial hyphae formation. Chaplins are also involved in cell attachment to a hydrophobic surface. Forms amyloid fibrils in vitro probably composed of stacked beta-sheets, at low extracellular concentrations individually restores the ability to form aerial hyphae to a chaplin-deficient strain. A small chaplin extract (ChpD, ChpE, ChpF, ChpG and ChpH) self-assembles into 2 different amyloids; small fibrils at the air-water interface form an amphipathic membrane that resembles spore-surface structures involved in aerial hyphae formation, and hydrophilic fibrils in solution that resemble the fibers that attach cells to a hydrophobic surface. At the air-water interface the hydrophilic surface is in contact with water (probably equivalent to the peptidoglycan layer), while the hydrophobic face is exposed to the air, making the surface of the aerial hyphae hydrophobic. A small chaplin extract applied to a chaplin-deficient strain restores aerial hyphae formation. The small chaplin extract forms an amyloid-like structure similar to that seen on the surface of cells without rodlets (rdlA-rdlB deletions), and is highly surface active, reducing surface tension from 72 to 26 mJ/m(2), which probably allows escape of hyphae from an aqueous environment into air. ChpF alone is less surface active at pH 3.0 than at pH 10.0, it reduces the surface tension of water from 72.8 mN/m to 50 mN/m at pH 3.0 or to 37 mN/m at pH 10.0. ChpF and ChpG are sufficient to restore the rodlet layer and hydrophobicity to a strain deleted for the other 6 chaplin genes. This is Chaplin-F from Streptomyces coelicolor (strain ATCC BAA-471 / A3(2) / M145).